Reading from the N-terminus, the 383-residue chain is 8-amino-7-oxononanoate synthase (383 aa).

A substrate-binding site is contributed by R21. 108–109 (GF) contacts pyridoxal 5'-phosphate. H133 is a binding site for substrate. Pyridoxal 5'-phosphate is bound by residues S179, H207, and T233. K236 is modified (N6-(pyridoxal phosphate)lysine). T350 is a binding site for substrate.

Belongs to the class-II pyridoxal-phosphate-dependent aminotransferase family. BioF subfamily. Homodimer. It depends on pyridoxal 5'-phosphate as a cofactor.

The catalysed reaction is 6-carboxyhexanoyl-[ACP] + L-alanine + H(+) = (8S)-8-amino-7-oxononanoate + holo-[ACP] + CO2. Its pathway is cofactor biosynthesis; biotin biosynthesis. Catalyzes the decarboxylative condensation of pimeloyl-[acyl-carrier protein] and L-alanine to produce 8-amino-7-oxononanoate (AON), [acyl-carrier protein], and carbon dioxide. This chain is 8-amino-7-oxononanoate synthase, found in Cronobacter sakazakii (strain ATCC BAA-894) (Enterobacter sakazakii).